Consider the following 64-residue polypeptide: Large ribosomal subunit protein bL33 (64 aa).

This sequence belongs to the bacterial ribosomal protein bL33 family.

In Parasynechococcus marenigrum (strain WH8102), this protein is Large ribosomal subunit protein bL33.